The sequence spans 95 residues: Probable FAD-linked sulfhydryl oxidase OPG072 (95 aa).

The Intravirion segment spans residues methionine 1–arginine 8. Positions methionine 1–leucine 95 constitute an ERV/ALR sulfhydryl oxidase domain. The chain crosses the membrane as a helical span at residues alanine 9 to glycine 25. At asparagine 26–leucine 95 the chain is on the virion surface side. A disulfide bridge links cysteine 43 with cysteine 46.

The protein belongs to the orthopoxvirus OPG072 family. As to quaternary structure, interacts with OPG128; this interaction involves formation of a transient disulfide-bonded intermediate, allowing disulfide bond transfer. FAD is required as a cofactor.

It is found in the virion membrane. The protein resides in the host cytoplasm. It carries out the reaction 2 R'C(R)SH + O2 = R'C(R)S-S(R)CR' + H2O2. In terms of biological role, FAD-dependent sulfhydryl oxidase that catalyzes disulfide bond formation. The complete pathway for formation of disulfide bonds in intracellular virion membrane proteins sequentially involves thiol-disulfide transfer between OPG072, OPG128 and OPG088. The sequence is that of Probable FAD-linked sulfhydryl oxidase OPG072 (OPG072) from Monkeypox virus.